A 177-amino-acid chain; its full sequence is Probable inosine/xanthosine triphosphatase (177 aa).

Belongs to the YjjX NTPase family. In terms of assembly, homodimer. Requires Mg(2+) as cofactor. The cofactor is Mn(2+).

It catalyses the reaction XTP + H2O = XDP + phosphate + H(+). It carries out the reaction ITP + H2O = IDP + phosphate + H(+). Its function is as follows. Phosphatase that hydrolyzes non-canonical purine nucleotides such as XTP and ITP to their respective diphosphate derivatives. Probably excludes non-canonical purines from DNA/RNA precursor pool, thus preventing their incorporation into DNA/RNA and avoiding chromosomal lesions. The sequence is that of Probable inosine/xanthosine triphosphatase from Pyrobaculum islandicum (strain DSM 4184 / JCM 9189 / GEO3).